The following is a 177-amino-acid chain: Alkyl hydroperoxide reductase AhpD (177 aa).

The active-site Proton donor is the C131. A disulfide bridge connects residues C131 and C134. The Cysteine sulfenic acid (-SOH) intermediate role is filled by C134.

This sequence belongs to the AhpD family.

It carries out the reaction N(6)-[(R)-dihydrolipoyl]-L-lysyl-[lipoyl-carrier protein] + a hydroperoxide = N(6)-[(R)-lipoyl]-L-lysyl-[lipoyl-carrier protein] + an alcohol + H2O. Its function is as follows. Antioxidant protein with alkyl hydroperoxidase activity. Required for the reduction of the AhpC active site cysteine residues and for the regeneration of the AhpC enzyme activity. This chain is Alkyl hydroperoxide reductase AhpD, found in Solibacter usitatus (strain Ellin6076).